A 184-amino-acid chain; its full sequence is Adenine phosphoribosyltransferase (184 aa).

It belongs to the purine/pyrimidine phosphoribosyltransferase family. In terms of assembly, homodimer.

Its subcellular location is the cytoplasm. The enzyme catalyses AMP + diphosphate = 5-phospho-alpha-D-ribose 1-diphosphate + adenine. The protein operates within purine metabolism; AMP biosynthesis via salvage pathway; AMP from adenine: step 1/1. Its function is as follows. Catalyzes a salvage reaction resulting in the formation of AMP, that is energically less costly than de novo synthesis. The protein is Adenine phosphoribosyltransferase of Shewanella putrefaciens (strain CN-32 / ATCC BAA-453).